The sequence spans 1050 residues: NAD-specific glutamate dehydrogenase (1050 aa).

The disordered stretch occupies residues 1 to 39 (MDSPSAPVPAHKLVDRLKDQTPRHPSPQPTHVSYPKVNG). Over residues 12-22 (KLVDRLKDQTP) the composition is skewed to basic and acidic residues. Residue Lys594 is part of the active site.

Belongs to the Glu/Leu/Phe/Val dehydrogenases family. As to quaternary structure, homotetramer.

It carries out the reaction L-glutamate + NAD(+) + H2O = 2-oxoglutarate + NH4(+) + NADH + H(+). This Neurospora crassa (strain ATCC 24698 / 74-OR23-1A / CBS 708.71 / DSM 1257 / FGSC 987) protein is NAD-specific glutamate dehydrogenase (gdh-1).